Here is a 186-residue protein sequence, read N- to C-terminus: UPF0200 protein PF1294 (186 aa).

7–14 contributes to the ATP binding site; it reads GMPGSGKG.

This sequence belongs to the UPF0200 family.

The sequence is that of UPF0200 protein PF1294 from Pyrococcus furiosus (strain ATCC 43587 / DSM 3638 / JCM 8422 / Vc1).